Consider the following 98-residue polypeptide: uncharacterized protein (98 aa).

It belongs to the HesB/IscA family.

This is an uncharacterized protein from Staphylococcus aureus (strain USA300).